We begin with the raw amino-acid sequence, 185 residues long: Ribosome maturation factor RimM (185 aa).

The 80-residue stretch at 106–185 (TGDYYWKDLI…TIEVDWDPGF (80 aa)) folds into the PRC barrel domain.

Belongs to the RimM family. In terms of assembly, binds ribosomal protein uS19.

It localises to the cytoplasm. Functionally, an accessory protein needed during the final step in the assembly of 30S ribosomal subunit, possibly for assembly of the head region. Essential for efficient processing of 16S rRNA. May be needed both before and after RbfA during the maturation of 16S rRNA. It has affinity for free ribosomal 30S subunits but not for 70S ribosomes. This chain is Ribosome maturation factor RimM, found in Photorhabdus laumondii subsp. laumondii (strain DSM 15139 / CIP 105565 / TT01) (Photorhabdus luminescens subsp. laumondii).